Reading from the N-terminus, the 661-residue chain is 7-beta-hydroxy-3-oxochol-24-oyl-CoA 4-desaturase (661 aa).

An FMN-binding site is contributed by Gln104. 168–171 (HCAH) provides a ligand contact to substrate. Tyr173 acts as the Proton donor in catalysis. FMN contacts are provided by residues Arg222, Lys298, and 320–321 (GR). Residues Cys344, Cys347, Cys351, and Cys363 each contribute to the [4Fe-4S] cluster site. Positions 394, 413, 421, 431, and 458 each coordinate FAD.

In the N-terminal section; belongs to the NADH:flavin oxidoreductase/NADH oxidase family. As to quaternary structure, homotrimer. FMN serves as cofactor. Requires FAD as cofactor. [4Fe-4S] cluster is required as a cofactor.

The catalysed reaction is 7beta-hydroxy-3-oxochol-24-oyl-CoA + NAD(+) = 7beta-hydroxy-3-oxochol-4-en-24-oyl-CoA + NADH + H(+). It participates in lipid metabolism; bile acid degradation. With respect to regulation, activity is inhibited by sulfhydryl-reactive compounds, acriflavine, o-phenanthroline and EDTA. In terms of biological role, NADH-dependent flavin oxidoreductase. Stereo-specific NAD(H)-dependent 3-oxo-delta4-cholenoic acid oxidoreductase involved in bile acid 7beta-dehydroxylation. This Clostridium scindens (strain JCM 10418 / VPI 12708) protein is 7-beta-hydroxy-3-oxochol-24-oyl-CoA 4-desaturase.